A 305-amino-acid polypeptide reads, in one-letter code: Ornithine carbamoyltransferase (305 aa).

Carbamoyl phosphate contacts are provided by residues 50-53 (STRT), glutamine 77, arginine 101, and 128-131 (HPCQ). Residues asparagine 162, aspartate 220, and 224–225 (SM) each bind L-ornithine. Carbamoyl phosphate contacts are provided by residues 260 to 261 (CL) and arginine 288.

It belongs to the aspartate/ornithine carbamoyltransferase superfamily. OTCase family.

It is found in the cytoplasm. It catalyses the reaction carbamoyl phosphate + L-ornithine = L-citrulline + phosphate + H(+). The protein operates within amino-acid degradation; L-arginine degradation via ADI pathway; carbamoyl phosphate from L-arginine: step 2/2. Functionally, reversibly catalyzes the transfer of the carbamoyl group from carbamoyl phosphate (CP) to the N(epsilon) atom of ornithine (ORN) to produce L-citrulline. This Akkermansia muciniphila (strain ATCC BAA-835 / DSM 22959 / JCM 33894 / BCRC 81048 / CCUG 64013 / CIP 107961 / Muc) protein is Ornithine carbamoyltransferase.